Reading from the N-terminus, the 203-residue chain is Holliday junction branch migration complex subunit RuvA (203 aa).

The tract at residues 1–64 (MFAYFRGRLT…EDAFLLYGFS (64 aa)) is domain I. The domain II stretch occupies residues 65-143 (SESERQLFRL…KMSPDGGKTI (79 aa)). Positions 144–150 (ASGSGGN) are flexible linker. The segment at 151-203 (LALQIKDDALNALITLGFSKPAAQKAVTGILEGNPSLSVEEVVKSALVSIHNS) is domain III.

It belongs to the RuvA family. Homotetramer. Forms an RuvA(8)-RuvB(12)-Holliday junction (HJ) complex. HJ DNA is sandwiched between 2 RuvA tetramers; dsDNA enters through RuvA and exits via RuvB. An RuvB hexamer assembles on each DNA strand where it exits the tetramer. Each RuvB hexamer is contacted by two RuvA subunits (via domain III) on 2 adjacent RuvB subunits; this complex drives branch migration. In the full resolvosome a probable DNA-RuvA(4)-RuvB(12)-RuvC(2) complex forms which resolves the HJ.

Its subcellular location is the cytoplasm. The RuvA-RuvB-RuvC complex processes Holliday junction (HJ) DNA during genetic recombination and DNA repair, while the RuvA-RuvB complex plays an important role in the rescue of blocked DNA replication forks via replication fork reversal (RFR). RuvA specifically binds to HJ cruciform DNA, conferring on it an open structure. The RuvB hexamer acts as an ATP-dependent pump, pulling dsDNA into and through the RuvAB complex. HJ branch migration allows RuvC to scan DNA until it finds its consensus sequence, where it cleaves and resolves the cruciform DNA. This chain is Holliday junction branch migration complex subunit RuvA, found in Chlorobium limicola (strain DSM 245 / NBRC 103803 / 6330).